We begin with the raw amino-acid sequence, 180 residues long: Bifunctional protein PyrR (180 aa).

Positions 101-113 (VVLVDDVIFKGRT) match the PRPP-binding motif.

This sequence belongs to the purine/pyrimidine phosphoribosyltransferase family. PyrR subfamily.

The catalysed reaction is UMP + diphosphate = 5-phospho-alpha-D-ribose 1-diphosphate + uracil. Regulates the transcription of the pyrimidine nucleotide (pyr) operon in response to exogenous pyrimidines. Functionally, also displays a weak uracil phosphoribosyltransferase activity which is not physiologically significant. The protein is Bifunctional protein PyrR of Trichormus variabilis (strain ATCC 29413 / PCC 7937) (Anabaena variabilis).